The sequence spans 325 residues: RNA ligase 1 (325 aa).

Mg(2+) is required as a cofactor. The cofactor is Mn(2+). Post-translationally, AMPylates itself (auto-AMPylation).

It carries out the reaction ATP + (ribonucleotide)n-3'-hydroxyl + 5'-phospho-(ribonucleotide)m = (ribonucleotide)n+m + AMP + diphosphate.. In terms of biological role, functions as an RNA ligase, in vitro. The ligation reaction entails three nucleotidyl transfer steps. In the first step, the RNA ligase reacts with ATP in the absence of nucleic acid to form a covalent ligase-AMP intermediate and release pyrophosphate. In step 2, the ligase-AMP binds to the nucleic acid and transfers the adenylate to the 5'-PO4 terminus to form an adenylylated intermediate. In step 3, the RNA ligase directs the attack of the 3'-OH on the 5'-phosphoanhydride linkage, resulting in a repaired 3'-5' phosphodiester and release of AMP. Exhibits selectivity for single-stranded RNA substrates and may not have nick-sealing activity on double-stranded DNA-RNA hybrids. May play a role in maintaining RNA integrity under stress conditions, for example in response to reactive oxygen species (ROS). This chain is RNA ligase 1, found in Rattus norvegicus (Rat).